Consider the following 115-residue polypeptide: Large ribosomal subunit protein uL24 (115 aa).

This sequence belongs to the universal ribosomal protein uL24 family. As to quaternary structure, part of the 50S ribosomal subunit.

One of two assembly initiator proteins, it binds directly to the 5'-end of the 23S rRNA, where it nucleates assembly of the 50S subunit. In terms of biological role, one of the proteins that surrounds the polypeptide exit tunnel on the outside of the subunit. In Aster yellows witches'-broom phytoplasma (strain AYWB), this protein is Large ribosomal subunit protein uL24.